The primary structure comprises 571 residues: Proline--tRNA ligase (571 aa).

It belongs to the class-II aminoacyl-tRNA synthetase family. ProS type 1 subfamily. In terms of assembly, homodimer.

Its subcellular location is the cytoplasm. The enzyme catalyses tRNA(Pro) + L-proline + ATP = L-prolyl-tRNA(Pro) + AMP + diphosphate. Catalyzes the attachment of proline to tRNA(Pro) in a two-step reaction: proline is first activated by ATP to form Pro-AMP and then transferred to the acceptor end of tRNA(Pro). As ProRS can inadvertently accommodate and process non-cognate amino acids such as alanine and cysteine, to avoid such errors it has two additional distinct editing activities against alanine. One activity is designated as 'pretransfer' editing and involves the tRNA(Pro)-independent hydrolysis of activated Ala-AMP. The other activity is designated 'posttransfer' editing and involves deacylation of mischarged Ala-tRNA(Pro). The misacylated Cys-tRNA(Pro) is not edited by ProRS. The chain is Proline--tRNA ligase from Syntrophotalea carbinolica (strain DSM 2380 / NBRC 103641 / GraBd1) (Pelobacter carbinolicus).